Reading from the N-terminus, the 252-residue chain is Movement protein (252 aa).

The interval 222–252 (YDGPYRPATTRPKSLLSSEDVKRASNKKNSS) is disordered.

Belongs to the tobamovirus movement protein family.

In terms of biological role, transports viral genome to neighboring plant cells directly through plasmosdesmata, without any budding. The movement protein allows efficient cell to cell propagation, by bypassing the host cell wall barrier. Displays RNA-binding activity. The protein is Movement protein of Bidens pilosa (Hairy beggarticks).